Reading from the N-terminus, the 338-residue chain is MSSAVVPADDILEPTLQNILDQKSLRWIFVGGKGGVGKTTTSCSLAIQLAKVRKSVLLISTDPAHNLSDAFGQKFGKEARLIDGFDNLSAMEIDPSASMQDLMAAGGDQAEDMGFGLGGMMQDLAFSIPGVDEAMSFAEVLKQVKSLSYEVIVFDTAPTGHTLRFLQFPTVLEKGLAKLSQLSSQFGPMLNSVLGARGGLPGGQNLDDVLSKMESLRETISEVNTQFKNADLTTFVCVCIAEFLSLYETERMIQELTSYHIDTHAIVVNQLLFPGKDSTCDQCKARRKMQKKYLNEIEELYEDFNVVRMPLLVEEVRGKEKLERFSDMLVHPYQPPQE.

Position 33–40 (33–40 (KGGVGKTT)) interacts with ATP. Asp62 is a catalytic residue. 2 residues coordinate ATP: Glu242 and Asn269. Residues Cys280 and Cys283 each contribute to the Zn(2+) site.

Belongs to the arsA ATPase family. As to quaternary structure, homodimer.

The protein resides in the cytoplasm. The protein localises to the endoplasmic reticulum. Functionally, ATPase required for the post-translational delivery of tail-anchored (TA) proteins to the endoplasmic reticulum. Recognizes and selectively binds the transmembrane domain of TA proteins in the cytosol. This complex then targets to the endoplasmic reticulum by membrane-bound receptors, where the tail-anchored protein is released for insertion. This process is regulated by ATP binding and hydrolysis. ATP binding drives the homodimer towards the closed dimer state, facilitating recognition of newly synthesized TA membrane proteins. ATP hydrolysis is required for insertion. Subsequently, the homodimer reverts towards the open dimer state, lowering its affinity for the membrane-bound receptor, and returning it to the cytosol to initiate a new round of targeting. This chain is ATPase GET3, found in Uncinocarpus reesii (strain UAMH 1704).